The primary structure comprises 622 residues: Low affinity potassium transport system protein Kup (622 aa).

Helical transmembrane passes span 9–29 (LPAV…TSPL), 49–69 (VFGF…LKYL), 101–121 (VLVI…VITP), 137–157 (PSMD…LFII), 165–185 (VGKL…VLGA), 212–232 (AVSF…EALY), 247–267 (WFTV…ALLL), 279–299 (LLAP…ATII), 337–357 (IYIP…IVSF), 363–383 (LAAA…ILFC), 397–417 (AWVL…ANVV), and 419–439 (ILSG…IMTT).

Belongs to the HAK/KUP transporter (TC 2.A.72) family.

The protein resides in the cell inner membrane. The catalysed reaction is K(+)(in) + H(+)(in) = K(+)(out) + H(+)(out). In terms of biological role, responsible for the low-affinity transport of potassium into the cell. Likely operates as a K(+):H(+) symporter. In Pectobacterium carotovorum subsp. carotovorum (strain PC1), this protein is Low affinity potassium transport system protein Kup.